The following is a 215-amino-acid chain: Putative zinc finger protein ORF121 (215 aa).

An RING-type; degenerate zinc finger spans residues 53 to 105 (CVICMEPTYTKKTLAECDIEGGALRVTTMPCPTHYICDNCIRQEMEDKCPICR).

In Magallana gigas (Pacific oyster), this protein is Putative zinc finger protein ORF121.